A 460-amino-acid polypeptide reads, in one-letter code: Kynurenine 3-monooxygenase (460 aa).

It belongs to the aromatic-ring hydroxylase family. KMO subfamily. FAD serves as cofactor.

The protein localises to the mitochondrion. It carries out the reaction L-kynurenine + NADPH + O2 + H(+) = 3-hydroxy-L-kynurenine + NADP(+) + H2O. Its pathway is cofactor biosynthesis; NAD(+) biosynthesis; quinolinate from L-kynurenine: step 1/3. Functionally, catalyzes the hydroxylation of L-kynurenine (L-Kyn) to form 3-hydroxy-L-kynurenine (L-3OHKyn). Required for synthesis of quinolinic acid. This is Kynurenine 3-monooxygenase from Dictyostelium discoideum (Social amoeba).